We begin with the raw amino-acid sequence, 301 residues long: E3 ubiquitin-protein ligase RNF144B (301 aa).

The interval 26–242 is TRIAD supradomain; it reads PLVTCKLCLC…YDKGPCRNKL (217 aa). Residues Cys30, Cys33, Cys53, Cys56, Cys121, Cys126, Cys145, Cys148, Cys153, Cys156, His161, Cys166, Cys191, and Cys194 each contribute to the Zn(2+) site. The RING-type 1 zinc finger occupies 30–80; sequence CKLCLCEQSLDKMTMLQECQCIFCTPCLKQYMVLSIREGCGSPITCPDMVC. The IBR-type zinc finger occupies 101–166; that stretch reads QLYQRLKFER…KDAWHEESSC (66 aa). An RING-type 2; atypical zinc finger spans residues 191-220; the sequence is CPVCRIYIERNEGCAQMMCKNCKHTFCWYC. Cys204 is an active-site residue. 6 residues coordinate Zn(2+): Cys209, Cys212, Cys217, Cys220, His232, and Cys238. Residues 256 to 276 traverse the membrane as a helical segment; that stretch reads VVGILVGLGVIALVTSPLLLL.

It belongs to the RBR family. RNF144 subfamily. Interacts with UBE2L3, UBE2L6 and LCMT2, as well as with BAX. Interacts with TBK1; this interaction inhibits TBK1 phosphorylation and 'Lys-63'-linked polyubiquitination. In terms of processing, auto-ubiquitinated.

Its subcellular location is the mitochondrion membrane. The protein localises to the cytoplasm. The catalysed reaction is [E2 ubiquitin-conjugating enzyme]-S-ubiquitinyl-L-cysteine + [acceptor protein]-L-lysine = [E2 ubiquitin-conjugating enzyme]-L-cysteine + [acceptor protein]-N(6)-ubiquitinyl-L-lysine.. It functions in the pathway protein modification; protein ubiquitination. E3 ubiquitin-protein ligase which accepts ubiquitin from E2 ubiquitin-conjugating enzymes UBE2L3 and UBE2L6 in the form of a thioester and then directly transfers the ubiquitin to targeted substrates such as LCMT2, thereby promoting their degradation. Induces apoptosis via a p53/TP53-dependent but caspase-independent mechanism. Plays a crucial role in maintaining the genomic stability by controlling the degradation of multiple proteins involved in mitotic progression and DNA damage. Regulates epithelial homeostasis by mediating degradation of CDKN1A and isoform 2 of TP63. Plays a regulatory role in innate immunity by negatively regulating IRF3 activation and IFN-beta production. Mechanistically, inhibits TBK1 phosphorylation and 'Lys-63'-linked polyubiquitination independently of its E3 ligase activity. Alternatively, promotes 'Lys-27' and 'Lys-33'-linked ubiquitination of IFIH1/MDA5, promoting selective autophagic degradation of IFIH1/MDA5 to inhibit antiviral response. This Mus musculus (Mouse) protein is E3 ubiquitin-protein ligase RNF144B (Rnf144b).